A 157-amino-acid polypeptide reads, in one-letter code: MAYTVSSANQLVYLGSVWADPLELQNLCTSALGNQFQTQQARTTVQQQFSDVWKTIPTATVRFPATGFKRFRYNAVLDSLVSALLGAFDTRNRIIEVENPQNPTTAETLDATMRVDDATVAIRASISPIMNELVRGTGMYNQALFESASGLTWATTP.

Position 2 is an N-acetylalanine; by host (alanine 2).

Belongs to the virgaviridae capsid protein family.

The protein resides in the virion. Capsid protein self-assembles to form rod-shaped virions about 18 nm in diameter with a central canal enclosing the viral genomic RNA. This is Capsid protein (CP) from Capsicum (peppers).